The chain runs to 31 residues: Morintide mO3 (31 aa).

In terms of domain architecture, Chitin-binding type-1 spans 1–30 (NRLCCSQYGFCGTTSEYCSRANGCQSNCWG). Disulfide bonds link C4–C18 and C24–C28.

As to expression, seeds (at protein level).

In terms of biological role, chitin-binding protein which functions in defense against chitin-containing fungal pathogens. The polypeptide is Morintide mO3 (Moringa oleifera (Horseradish tree)).